A 270-amino-acid chain; its full sequence is MEYIKKIALYMSVLLLIIFIGGCGNMKEEQKKEANTNKTDSKEEKIKKSFAKTLDMYPIKNLEELYDKEGYRDGEFEKGDKGMWTIYTDFAKSNKPGELSNEGMVLYLDRNTRTAKGYYFVRTFYRKDKLPDRKNYKVEMKNNKIILLDKVEDPNLKKRIENFKFFGQYANLKELKNYSNGDVSINENVPSYDVKYKMSNKDENVKQLRSRYNIPTDKSPVLKMHIDGNLKGSSVGDRKLEIDFSKRENSHLSVIDSLDYQPAKVDEDER.

Residues methionine 1–glycine 22 form the signal peptide. Cysteine 23 carries the N-palmitoyl cysteine lipid modification. Cysteine 23 is lipidated: S-diacylglycerol cysteine.

This sequence belongs to the staphylococcal tandem lipoprotein family.

The protein resides in the cell membrane. This is an uncharacterized protein from Staphylococcus aureus (strain N315).